The following is a 267-amino-acid chain: MNHQKSTTSGDDETDYFDAIHVDLFTAKILSKLPVKSIAQCRCVSKLWSSQIRRPYYNMLFPIMSPAPPRILFTIENAEGLFFYTSPQPRNPDENTSLVATLHHRTSGNSLLITSPPVGGLLCLEHDRKNYSRVLVISNPITGEFLALPKLRINEIKKELLYLNETYIFGYDPIDKQSKDAERHQWSKHIYQLPNRYLNKVVAAGVVGSSEIVFYRKYTREQDQFFIAYYNLESNIITRVILEVPLLFSGTCCVNAFTNYVGDVRLM.

Positions 15-63 (DYFDAIHVDLFTAKILSKLPVKSIAQCRCVSKLWSSQIRRPYYNMLFPI) constitute an F-box domain.

This is Putative F-box protein At1g61060 from Arabidopsis thaliana (Mouse-ear cress).